The following is a 30-amino-acid chain: Cyclotide hypa-A (30 aa).

Positions 1–30 (GIPCAESCVYIPCTITALLGCSCKNKVCYN) form a cross-link, cyclopeptide (Gly-Asn). 3 cysteine pairs are disulfide-bonded: Cys-4–Cys-21, Cys-8–Cys-23, and Cys-13–Cys-28.

Post-translationally, this is a cyclic peptide.

In terms of biological role, probably participates in a plant defense mechanism. The sequence is that of Cyclotide hypa-A from Pombalia parviflora (Violetilla).